A 328-amino-acid chain; its full sequence is Phenylalanine--tRNA ligase alpha subunit (328 aa).

Glu-245 provides a ligand contact to Mg(2+).

It belongs to the class-II aminoacyl-tRNA synthetase family. Phe-tRNA synthetase alpha subunit type 1 subfamily. Tetramer of two alpha and two beta subunits. Requires Mg(2+) as cofactor.

The protein localises to the cytoplasm. It carries out the reaction tRNA(Phe) + L-phenylalanine + ATP = L-phenylalanyl-tRNA(Phe) + AMP + diphosphate + H(+). The chain is Phenylalanine--tRNA ligase alpha subunit (pheS) from Helicobacter pylori (strain ATCC 700392 / 26695) (Campylobacter pylori).